Reading from the N-terminus, the 295-residue chain is Sulfotransferase 1A3 (295 aa).

48–53 (KSGTTW) contacts 3'-phosphoadenylyl sulfate. Residues aspartate 86 and 106 to 108 (KSH) each bind dopamine. Histidine 108 acts as the Proton acceptor in catalysis. Residues arginine 130 and serine 138 each coordinate 3'-phosphoadenylyl sulfate. Position 146 (glutamate 146) interacts with dopamine. 3'-phosphoadenylyl sulfate contacts are provided by residues tyrosine 193, 227-232 (TSFKEM), and 257-259 (RKG).

The protein belongs to the sulfotransferase 1 family. In terms of assembly, homodimer. Post-translationally, the N-terminus is blocked. In terms of tissue distribution, liver, colon, kidney, lung, brain, spleen, small intestine, placenta and leukocyte.

The protein localises to the cytoplasm. It carries out the reaction a phenol + 3'-phosphoadenylyl sulfate = an aryl sulfate + adenosine 3',5'-bisphosphate + H(+). The enzyme catalyses 4-nitrophenol + 3'-phosphoadenylyl sulfate = 4-nitrophenyl sulfate + adenosine 3',5'-bisphosphate. It catalyses the reaction dopamine + 3'-phosphoadenylyl sulfate = dopamine 3-O-sulfate + adenosine 3',5'-bisphosphate + H(+). The catalysed reaction is dopamine + 3'-phosphoadenylyl sulfate = dopamine 4-O-sulfate + adenosine 3',5'-bisphosphate + H(+). It carries out the reaction serotonin + 3'-phosphoadenylyl sulfate = serotonin O-sulfate + adenosine 3',5'-bisphosphate + H(+). The enzyme catalyses (R)-adrenaline + 3'-phosphoadenylyl sulfate = (R)-adrenaline 4'-O-sulfate + adenosine 3',5'-bisphosphate + H(+). It catalyses the reaction (R)-noradrenaline + 3'-phosphoadenylyl sulfate = (R)-noradrenaline 4'-O-sulfate + adenosine 3',5'-bisphosphate + H(+). The catalysed reaction is 3,3',5-triiodo-L-thyronine + 3'-phosphoadenylyl sulfate = 3,3',5-triiodo-L-thyronine sulfate + adenosine 3',5'-bisphosphate + H(+). It carries out the reaction 3,3',5'-triiodo-L-thyronine + 3'-phosphoadenylyl sulfate = 3,3',5'-triiodo-L-thyronine sulfate + adenosine 3',5'-bisphosphate + H(+). The enzyme catalyses 3,3'-diiodo-L-thyronine + 3'-phosphoadenylyl sulfate = 3,3'-diiodo-L-thyronine sulfate + adenosine 3',5'-bisphosphate + H(+). It catalyses the reaction L-thyroxine + 3'-phosphoadenylyl sulfate = L-thyroxine sulfate + adenosine 3',5'-bisphosphate + H(+). Sulfotransferase that utilizes 3'-phospho-5'-adenylyl sulfate (PAPS) as sulfonate donor to catalyze the sulfate conjugation of phenolic monoamines (neurotransmitters such as dopamine, (R)-adrenaline/epinephrine, (R)-noradrenaline/norepinephrine and serotonin) and phenolic and catechol drugs. Catalyzes the sulfation of T4 (L-thyroxine/3,5,3',5'-tetraiodothyronine), T3 (3,5,3'-triiodothyronine), rT3 (3,3',5'-triiodothyronine) and 3,3'-T2 (3,3'-diiodothyronine), with a substrate preference of 3,3'-T2 &gt; rT3 &gt; T3 &gt; T4. This is Sulfotransferase 1A3 (SULT1A3) from Homo sapiens (Human).